Consider the following 487-residue polypeptide: N-succinylglutamate 5-semialdehyde dehydrogenase (487 aa).

221–226 (GSSDTG) lines the NAD(+) pocket. Catalysis depends on residues glutamate 244 and cysteine 278.

This sequence belongs to the aldehyde dehydrogenase family. AstD subfamily.

The enzyme catalyses N-succinyl-L-glutamate 5-semialdehyde + NAD(+) + H2O = N-succinyl-L-glutamate + NADH + 2 H(+). It functions in the pathway amino-acid degradation; L-arginine degradation via AST pathway; L-glutamate and succinate from L-arginine: step 4/5. In terms of biological role, catalyzes the NAD-dependent reduction of succinylglutamate semialdehyde into succinylglutamate. This chain is N-succinylglutamate 5-semialdehyde dehydrogenase, found in Burkholderia ambifaria (strain ATCC BAA-244 / DSM 16087 / CCUG 44356 / LMG 19182 / AMMD) (Burkholderia cepacia (strain AMMD)).